The following is a 407-amino-acid chain: 1-deoxy-D-xylulose 5-phosphate reductoisomerase (407 aa).

Residues Thr10, Gly11, Ser12, Ile13, Gly36, and Asn131 each coordinate NADPH. Lys132 contributes to the 1-deoxy-D-xylulose 5-phosphate binding site. Glu133 provides a ligand contact to NADPH. Asp155 serves as a coordination point for Mn(2+). 1-deoxy-D-xylulose 5-phosphate-binding residues include Ser156, Glu157, Ser181, and His204. Glu157 serves as a coordination point for Mn(2+). Residue Gly210 coordinates NADPH. 4 residues coordinate 1-deoxy-D-xylulose 5-phosphate: Ser217, Asn222, Lys223, and Glu226. Glu226 contacts Mn(2+).

Belongs to the DXR family. It depends on Mg(2+) as a cofactor. Mn(2+) serves as cofactor.

It catalyses the reaction 2-C-methyl-D-erythritol 4-phosphate + NADP(+) = 1-deoxy-D-xylulose 5-phosphate + NADPH + H(+). The protein operates within isoprenoid biosynthesis; isopentenyl diphosphate biosynthesis via DXP pathway; isopentenyl diphosphate from 1-deoxy-D-xylulose 5-phosphate: step 1/6. Functionally, catalyzes the NADPH-dependent rearrangement and reduction of 1-deoxy-D-xylulose-5-phosphate (DXP) to 2-C-methyl-D-erythritol 4-phosphate (MEP). This Cutibacterium acnes (strain DSM 16379 / KPA171202) (Propionibacterium acnes) protein is 1-deoxy-D-xylulose 5-phosphate reductoisomerase.